A 576-amino-acid chain; its full sequence is Apolipoprotein N-acyltransferase 1 (576 aa).

7 consecutive transmembrane segments (helical) span residues 15 to 35 (LILC…FSFF), 38 to 58 (GVFA…TSIW), 60 to 80 (AFLW…YWIP), 92 to 112 (FVSI…FFLF), 128 to 148 (YILL…FQIF), 168 to 188 (ICGV…FLIL), and 204 to 224 (IASL…IGYI). In terms of domain architecture, CN hydrolase spans 236–538 (LSVLMIQPDT…TGTRAFSIRL (303 aa)). The Proton acceptor role is filled by Glu-285. Residue Lys-355 is part of the active site. Cys-446 acts as the Nucleophile in catalysis. Residues 549 to 569 (FGNSFLWIFCILILISRLIFV) traverse the membrane as a helical segment.

It belongs to the CN hydrolase family. Apolipoprotein N-acyltransferase subfamily.

The protein localises to the cell inner membrane. It carries out the reaction N-terminal S-1,2-diacyl-sn-glyceryl-L-cysteinyl-[lipoprotein] + a glycerophospholipid = N-acyl-S-1,2-diacyl-sn-glyceryl-L-cysteinyl-[lipoprotein] + a 2-acyl-sn-glycero-3-phospholipid + H(+). It participates in protein modification; lipoprotein biosynthesis (N-acyl transfer). Its function is as follows. Catalyzes the phospholipid dependent N-acylation of the N-terminal cysteine of apolipoprotein, the last step in lipoprotein maturation. The chain is Apolipoprotein N-acyltransferase 1 from Leptospira interrogans serogroup Icterohaemorrhagiae serovar Lai (strain 56601).